Here is a 493-residue protein sequence, read N- to C-terminus: Guanosine-5'-triphosphate,3'-diphosphate pyrophosphatase (493 aa).

This sequence belongs to the GppA/Ppx family. GppA subfamily.

The enzyme catalyses guanosine 3'-diphosphate 5'-triphosphate + H2O = guanosine 3',5'-bis(diphosphate) + phosphate + H(+). The protein operates within purine metabolism; ppGpp biosynthesis; ppGpp from GTP: step 2/2. Functionally, catalyzes the conversion of pppGpp to ppGpp. Guanosine pentaphosphate (pppGpp) is a cytoplasmic signaling molecule which together with ppGpp controls the 'stringent response', an adaptive process that allows bacteria to respond to amino acid starvation, resulting in the coordinated regulation of numerous cellular activities. The polypeptide is Guanosine-5'-triphosphate,3'-diphosphate pyrophosphatase (Salmonella agona (strain SL483)).